Reading from the N-terminus, the 165-residue chain is RNA pyrophosphohydrolase (165 aa).

Positions 6–149 (GYRPNVGIII…KQSVYHQALT (144 aa)) constitute a Nudix hydrolase domain. Positions 38-59 (GGVRENETPQQAVFRELKEEVG) match the Nudix box motif.

The protein belongs to the Nudix hydrolase family. RppH subfamily. A divalent metal cation serves as cofactor.

Functionally, accelerates the degradation of transcripts by removing pyrophosphate from the 5'-end of triphosphorylated RNA, leading to a more labile monophosphorylated state that can stimulate subsequent ribonuclease cleavage. In Hydrogenovibrio crunogenus (strain DSM 25203 / XCL-2) (Thiomicrospira crunogena), this protein is RNA pyrophosphohydrolase.